Reading from the N-terminus, the 459-residue chain is ATP synthase subunit beta (459 aa).

149-156 (GGAGVGKT) contacts ATP.

It belongs to the ATPase alpha/beta chains family. As to quaternary structure, F-type ATPases have 2 components, CF(1) - the catalytic core - and CF(0) - the membrane proton channel. CF(1) has five subunits: alpha(3), beta(3), gamma(1), delta(1), epsilon(1). CF(0) has three main subunits: a(1), b(2) and c(9-12). The alpha and beta chains form an alternating ring which encloses part of the gamma chain. CF(1) is attached to CF(0) by a central stalk formed by the gamma and epsilon chains, while a peripheral stalk is formed by the delta and b chains.

It is found in the cell inner membrane. The enzyme catalyses ATP + H2O + 4 H(+)(in) = ADP + phosphate + 5 H(+)(out). Produces ATP from ADP in the presence of a proton gradient across the membrane. The catalytic sites are hosted primarily by the beta subunits. The polypeptide is ATP synthase subunit beta (Pseudomonas savastanoi pv. phaseolicola (strain 1448A / Race 6) (Pseudomonas syringae pv. phaseolicola (strain 1448A / Race 6))).